The sequence spans 41 residues: Photosystem I reaction center subunit IX (41 aa).

Residues 7-27 (YLSTAPVLTLVSLTAVAGLLI) traverse the membrane as a helical segment.

The protein belongs to the PsaJ family.

Its subcellular location is the plastid. The protein localises to the chloroplast thylakoid membrane. Functionally, may help in the organization of the PsaE and PsaF subunits. This Chlorella vulgaris (Green alga) protein is Photosystem I reaction center subunit IX.